The chain runs to 531 residues: NADH-quinone oxidoreductase subunit N (531 aa).

14 helical membrane-spanning segments follow: residues 8–28, 41–61, 81–101, 146–166, 172–192, 208–228, 250–270, 282–302, 318–338, 350–370, 372–392, 418–438, 453–473, and 500–520; these read VEYF…AGVL, AQVT…IVVA, ATLF…VFMA, GATQ…MMVF, LLTM…MCGL, FLLG…LYGA, ALAG…AVPF, PTPI…GALL, PVLW…AVNQ, VAHV…GLSA, LFYL…VGLV, IVGV…LTSG, GAVP…YFYV, and AAIA…QPVL.

It belongs to the complex I subunit 2 family. NDH-1 is composed of 14 different subunits. Subunits NuoA, H, J, K, L, M, N constitute the membrane sector of the complex.

Its subcellular location is the cell membrane. It carries out the reaction a quinone + NADH + 5 H(+)(in) = a quinol + NAD(+) + 4 H(+)(out). NDH-1 shuttles electrons from NADH, via FMN and iron-sulfur (Fe-S) centers, to quinones in the respiratory chain. The immediate electron acceptor for the enzyme in this species is believed to be a menaquinone. Couples the redox reaction to proton translocation (for every two electrons transferred, four hydrogen ions are translocated across the cytoplasmic membrane), and thus conserves the redox energy in a proton gradient. This Mycobacterium tuberculosis (strain CDC 1551 / Oshkosh) protein is NADH-quinone oxidoreductase subunit N.